The following is a 110-amino-acid chain: Large ribosomal subunit protein uL22 (110 aa).

The protein belongs to the universal ribosomal protein uL22 family. In terms of assembly, part of the 50S ribosomal subunit.

This protein binds specifically to 23S rRNA; its binding is stimulated by other ribosomal proteins, e.g. L4, L17, and L20. It is important during the early stages of 50S assembly. It makes multiple contacts with different domains of the 23S rRNA in the assembled 50S subunit and ribosome. In terms of biological role, the globular domain of the protein is located near the polypeptide exit tunnel on the outside of the subunit, while an extended beta-hairpin is found that lines the wall of the exit tunnel in the center of the 70S ribosome. The protein is Large ribosomal subunit protein uL22 of Syntrophus aciditrophicus (strain SB).